The chain runs to 662 residues: Hypoxia-inducible factor 3-alpha (662 aa).

A disordered region spans residues 1–25 (MDWDQDRSSTELRKEKSRDAARSRR). The 54-residue stretch at 12-65 (LRKEKSRDAARSRRSQETEVLYQLAHTLPFARGVSAHLDKASIMRLTISYLRMH) folds into the bHLH domain. Positions 75–98 (QVRKEGEPLDACYLKALEGFVMVL) are nuclear localization signal. PAS domains are found at residues 80–150 (GEPL…PSLS) and 225–295 (PHPA…LSKG). A nuclear export signal region spans residues 228–272 (ASLEPPLGRGAFLSRHSLDMKFTYCDERIAEVAGYSPDDLIGCSA). The tract at residues 352–379 (EQTEQHTRRPPQLGTSSKKGIPGNSLDP) is disordered. The LRRLL signature appears at 410 to 413 (LRRL). Disordered stretches follow at residues 417–445 (ILDG…ADLP) and 459–480 (STAR…PDTP). Low complexity predominate over residues 421–433 (PPTAATPSTPQAA). The interval 448–581 (LAVGLENAHR…SEDKGLELLE (134 aa)) is ODD. Positions 450–501 (VGLENAHRLSTARKNKTMETDLDIAQDPDTPDLEMLAPYISMDDDFQLNSSE) are NTAD. Lys463 participates in a covalent cross-link: Glycyl lysine isopeptide (Lys-Gly) (interchain with G-Cter in ubiquitin). The span at 469–480 (TDLDIAQDPDTP) shows a compositional bias: acidic residues. The LAPYISMD motif lies at 485 to 492 (LAPYISMD). Position 487 is a 4-hydroxyproline (Pro487). The segment at 500-595 (SEQLPKVHRR…KRSPRLEPGS (96 aa)) is disordered. Residues 505–521 (KVHRRPPRTARRPRARS) show a composition bias toward basic residues. Residue Lys565 forms a Glycyl lysine isopeptide (Lys-Gly) (interchain with G-Cter in ubiquitin) linkage. The segment covering 572-584 (SEDKGLELLETKP) has biased composition (basic and acidic residues).

As to quaternary structure, interacts with ARNT, BAD, BCL2L2, EPAS1, HIF1A, MCL1 and VHL. Post-translationally, in normoxia, hydroxylated on Pro-487 in the oxygen-dependent degradation domain (ODD) by PHD. The hydroxylated proline promotes interaction with VHL, initiating rapid ubiquitination and subsequent proteasomal degradation. In terms of processing, ubiquitinated; ubiquitination occurs in a VHL- and oxygen-dependent pathway and subsequently targeted for proteasomal degradation. In terms of tissue distribution, expressed in the perivenous zone of the liver. Expressed in all tissues examined during normoxia. Expressed in brain and lung. Expressed in periportal and perivenous hepatocytes and in endothelial cells of the central vein (at protein level). Highest expression seen in the cerebral cortex, hippocampus, and lung. Low expression in myocardial tissue and liver.

The protein resides in the nucleus. The protein localises to the cytoplasm. It localises to the nucleus speckle. It is found in the mitochondrion. Acts as a transcriptional regulator in adaptive response to low oxygen tension. Attenuates the ability of transcription factor HIF1A, EPAS1 and the HIF1A-ARNT complex to bind to hypoxia-responsive elements (HRE) located within the enhancer/promoter of hypoxia-inducible target genes and hence inhibits HRE-driven transcriptional activation. Functions as an inhibitor of angiogenesis in hypoxic cells of the cornea. Plays a role in the development of the cardiorespiratory system. May also be involved in apoptosis. May act as a tumor suppressor. This Rattus norvegicus (Rat) protein is Hypoxia-inducible factor 3-alpha.